Consider the following 371-residue polypeptide: DNA repair and recombination protein rti1 (371 aa).

The disordered stretch occupies residues 346–371 (IDHNRSMPIRRPSLTSNNSANTFSTK). The segment covering 358–371 (SLTSNNSANTFSTK) has biased composition (polar residues).

Belongs to the RAD52 family. Interacts with rph51 and rph54.

Active in the repair of DNA damage and in mating-type switching. Probably involved in the repair of DNA double-strands breaks. Has a role in promoting S phase completion. This Schizosaccharomyces pombe (strain 972 / ATCC 24843) (Fission yeast) protein is DNA repair and recombination protein rti1 (rti1).